Here is a 331-residue protein sequence, read N- to C-terminus: Ketol-acid reductoisomerase (NADP(+)) (331 aa).

One can recognise a KARI N-terminal Rossmann domain in the interval Ala2–Thr182. Residues Tyr25–Gln28, Ser51, Ser53, and Asp83–Gln86 each bind NADP(+). The active site involves His108. Gly134 lines the NADP(+) pocket. Positions Asn183–Leu328 constitute a KARI C-terminal knotted domain. Mg(2+) contacts are provided by Asp191, Glu195, Glu227, and Glu231. Residue Ser252 participates in substrate binding.

It belongs to the ketol-acid reductoisomerase family. Requires Mg(2+) as cofactor.

The catalysed reaction is (2R)-2,3-dihydroxy-3-methylbutanoate + NADP(+) = (2S)-2-acetolactate + NADPH + H(+). It catalyses the reaction (2R,3R)-2,3-dihydroxy-3-methylpentanoate + NADP(+) = (S)-2-ethyl-2-hydroxy-3-oxobutanoate + NADPH + H(+). Its pathway is amino-acid biosynthesis; L-isoleucine biosynthesis; L-isoleucine from 2-oxobutanoate: step 2/4. The protein operates within amino-acid biosynthesis; L-valine biosynthesis; L-valine from pyruvate: step 2/4. Involved in the biosynthesis of branched-chain amino acids (BCAA). Catalyzes an alkyl-migration followed by a ketol-acid reduction of (S)-2-acetolactate (S2AL) to yield (R)-2,3-dihydroxy-isovalerate. In the isomerase reaction, S2AL is rearranged via a Mg-dependent methyl migration to produce 3-hydroxy-3-methyl-2-ketobutyrate (HMKB). In the reductase reaction, this 2-ketoacid undergoes a metal-dependent reduction by NADPH to yield (R)-2,3-dihydroxy-isovalerate. The sequence is that of Ketol-acid reductoisomerase (NADP(+)) from Synechococcus sp. (strain CC9311).